We begin with the raw amino-acid sequence, 334 residues long: Aspartate carbamoyltransferase catalytic subunit (334 aa).

The carbamoyl phosphate site is built by R71 and T72. L-aspartate is bound at residue K99. 3 residues coordinate carbamoyl phosphate: R121, H151, and Q154. Residues R184 and R239 each coordinate L-aspartate. Residues G280 and P281 each contribute to the carbamoyl phosphate site.

The protein belongs to the aspartate/ornithine carbamoyltransferase superfamily. ATCase family. In terms of assembly, heterododecamer (2C3:3R2) of six catalytic PyrB chains organized as two trimers (C3), and six regulatory PyrI chains organized as three dimers (R2).

The enzyme catalyses carbamoyl phosphate + L-aspartate = N-carbamoyl-L-aspartate + phosphate + H(+). The protein operates within pyrimidine metabolism; UMP biosynthesis via de novo pathway; (S)-dihydroorotate from bicarbonate: step 2/3. Functionally, catalyzes the condensation of carbamoyl phosphate and aspartate to form carbamoyl aspartate and inorganic phosphate, the committed step in the de novo pyrimidine nucleotide biosynthesis pathway. This Pseudomonas savastanoi pv. phaseolicola (strain 1448A / Race 6) (Pseudomonas syringae pv. phaseolicola (strain 1448A / Race 6)) protein is Aspartate carbamoyltransferase catalytic subunit.